A 428-amino-acid chain; its full sequence is Trigger factor (428 aa).

The region spanning 163-248 (GNIAVIDFKG…VKEIKVKELP (86 aa)) is the PPIase FKBP-type domain.

This sequence belongs to the FKBP-type PPIase family. Tig subfamily.

The protein localises to the cytoplasm. It catalyses the reaction [protein]-peptidylproline (omega=180) = [protein]-peptidylproline (omega=0). In terms of biological role, involved in protein export. Acts as a chaperone by maintaining the newly synthesized protein in an open conformation. Functions as a peptidyl-prolyl cis-trans isomerase. The protein is Trigger factor of Clostridium perfringens (strain ATCC 13124 / DSM 756 / JCM 1290 / NCIMB 6125 / NCTC 8237 / Type A).